A 240-amino-acid chain; its full sequence is ATP-dependent dethiobiotin synthetase BioD (240 aa).

15-20 (EIGKTF) is a binding site for ATP. Residue Thr-19 participates in Mg(2+) binding. Lys-40 is an active-site residue. ATP is bound by residues Asp-57, 118–121 (EGVG), and 178–179 (NR). Mg(2+)-binding residues include Asp-57 and Glu-118.

This sequence belongs to the dethiobiotin synthetase family. As to quaternary structure, homodimer. Mg(2+) is required as a cofactor.

The protein localises to the cytoplasm. It carries out the reaction (7R,8S)-7,8-diammoniononanoate + CO2 + ATP = (4R,5S)-dethiobiotin + ADP + phosphate + 3 H(+). The protein operates within cofactor biosynthesis; biotin biosynthesis; biotin from 7,8-diaminononanoate: step 1/2. Functionally, catalyzes a mechanistically unusual reaction, the ATP-dependent insertion of CO2 between the N7 and N8 nitrogen atoms of 7,8-diaminopelargonic acid (DAPA, also called 7,8-diammoniononanoate) to form a ureido ring. The polypeptide is ATP-dependent dethiobiotin synthetase BioD (Burkholderia pseudomallei (strain K96243)).